A 221-amino-acid chain; its full sequence is Deoxyribose-phosphate aldolase (221 aa).

Asp-89 acts as the Proton donor/acceptor in catalysis. The active-site Schiff-base intermediate with acetaldehyde is Lys-151. The active-site Proton donor/acceptor is the Lys-180.

The protein belongs to the DeoC/FbaB aldolase family. DeoC type 1 subfamily.

The protein resides in the cytoplasm. The enzyme catalyses 2-deoxy-D-ribose 5-phosphate = D-glyceraldehyde 3-phosphate + acetaldehyde. Its pathway is carbohydrate degradation; 2-deoxy-D-ribose 1-phosphate degradation; D-glyceraldehyde 3-phosphate and acetaldehyde from 2-deoxy-alpha-D-ribose 1-phosphate: step 2/2. Functionally, catalyzes a reversible aldol reaction between acetaldehyde and D-glyceraldehyde 3-phosphate to generate 2-deoxy-D-ribose 5-phosphate. The protein is Deoxyribose-phosphate aldolase of Mesomycoplasma hyopneumoniae (strain 232) (Mycoplasma hyopneumoniae).